A 426-amino-acid polypeptide reads, in one-letter code: Serine hydroxymethyltransferase (426 aa).

(6S)-5,6,7,8-tetrahydrofolate-binding positions include Leu113 and Gly117–Leu119. Lys222 carries the N6-(pyridoxal phosphate)lysine modification. Ser363–Phe365 is a (6S)-5,6,7,8-tetrahydrofolate binding site.

This sequence belongs to the SHMT family. Homodimer. Pyridoxal 5'-phosphate serves as cofactor.

Its subcellular location is the cytoplasm. It catalyses the reaction (6R)-5,10-methylene-5,6,7,8-tetrahydrofolate + glycine + H2O = (6S)-5,6,7,8-tetrahydrofolate + L-serine. The protein operates within one-carbon metabolism; tetrahydrofolate interconversion. It functions in the pathway amino-acid biosynthesis; glycine biosynthesis; glycine from L-serine: step 1/1. Its function is as follows. Catalyzes the reversible interconversion of serine and glycine with tetrahydrofolate (THF) serving as the one-carbon carrier. This reaction serves as the major source of one-carbon groups required for the biosynthesis of purines, thymidylate, methionine, and other important biomolecules. Also exhibits THF-independent aldolase activity toward beta-hydroxyamino acids, producing glycine and aldehydes, via a retro-aldol mechanism. This is Serine hydroxymethyltransferase from Phocaeicola vulgatus (strain ATCC 8482 / DSM 1447 / JCM 5826 / CCUG 4940 / NBRC 14291 / NCTC 11154) (Bacteroides vulgatus).